The sequence spans 185 residues: Transmembrane protein 252 (185 aa).

The next 2 helical transmembrane spans lie at 8 to 28 (VLCA…GFFI) and 39 to 59 (LVVA…GIFW). The interval 125–149 (YTETSLEPQDKDKNDPQPEAPPPYP) is disordered.

It is found in the membrane. This chain is Transmembrane protein 252 (Tmem252), found in Rattus norvegicus (Rat).